Here is a 57-residue protein sequence, read N- to C-terminus: Large ribosomal subunit protein bL32 (57 aa).

The segment at 1–37 (MAVQQNKPTRSKRGMRRSHDALTAVTSLSVDKTSGEK) is disordered.

The protein belongs to the bacterial ribosomal protein bL32 family.

This is Large ribosomal subunit protein bL32 from Escherichia fergusonii (strain ATCC 35469 / DSM 13698 / CCUG 18766 / IAM 14443 / JCM 21226 / LMG 7866 / NBRC 102419 / NCTC 12128 / CDC 0568-73).